A 64-amino-acid polypeptide reads, in one-letter code: Large ribosomal subunit protein bL35 (64 aa).

Belongs to the bacterial ribosomal protein bL35 family.

The sequence is that of Large ribosomal subunit protein bL35 from Chlorobium chlorochromatii (strain CaD3).